A 133-amino-acid chain; its full sequence is Ribonuclease VapC29 (133 aa).

The PINc domain occupies 3–122; it reads VLLDANVLIA…TLDSGLAHLH (120 aa). Mg(2+)-binding residues include Asp-6 and Asp-97.

Belongs to the PINc/VapC protein family. It depends on Mg(2+) as a cofactor.

Toxic component of a type II toxin-antitoxin (TA) system. Its cognate antitoxin is VapB29. Has ribonuclease activity. This Mycobacterium tuberculosis (strain CDC 1551 / Oshkosh) protein is Ribonuclease VapC29.